Reading from the N-terminus, the 65-residue chain is Sulfur carrier protein TtuB (65 aa).

Glycine 65 carries the post-translational modification 1-thioglycine; alternate. Glycyl adenylate; alternate is present on glycine 65. Glycine 65 participates in a covalent cross-link: Glycyl cysteine thioester (Gly-Cys) (interchain with C-192 in TtuC); alternate. Glycine 65 participates in a covalent cross-link: Glycyl lysine isopeptide (Gly-Lys) (interchain with K-? in acceptor proteins); alternate.

This sequence belongs to the TtuB family. In terms of assembly, is able to form a heterocomplex with TtuA. Post-translationally, the C-terminal glycine residue of TtuB is first activated by TtuC as an acyl-adenylate (TtuB-COAMP), and then converted to the thiocarboxylate form (TtuB-COSH) by the cysteine desulfurases IscS or SufS.

It functions in the pathway tRNA modification. In terms of biological role, required for the 2-thiolation of 5-methyluridine residue at position 54 in the T loop of tRNAs, leading to 5-methyl-2-thiouridine (m(5)s(2)U or s(2)T). This modification allows thermal stabilization of tRNAs in thermophilic microorganisms, and is essential for cell growth at high temperatures. Thiocarboxylated TtuB functions as the sulfur donor in the sulfurtransferase reaction catalyzed by TtuA. TtuB also functions as a protein modifier covalently attached to lysine residues of the target proteins TtuA and TtuC. TtuB conjugation might play a regulatory role to ensure appropriate sulfur transfer in cells. This chain is Sulfur carrier protein TtuB, found in Thermus thermophilus (strain ATCC BAA-163 / DSM 7039 / HB27).